The primary structure comprises 59 residues: Putative zinc finger protein ORF59a (59 aa).

The C2H2-type; degenerate zinc-finger motif lies at tyrosine 11 to threonine 33.

This is Putative zinc finger protein ORF59a from Acidianus hospitalis (AFV-1).